The primary structure comprises 207 residues: Arginine exporter protein ArgO (207 aa).

Helical transmembrane passes span 1–21 (MLSTFVQGFFLSAAMILPLGP), 42–62 (LCAISDGFLIGVGVFGGSALL), 67–87 (LLLQFVTWGGVAFLFWYGWGA), 111–131 (VVAIIFAVTWLNPHVYLDTIV), 150–170 (FGAASASVSWFFSLSLLAAWF), and 185–205 (GFICIIMWYIAWQLAKQGLLI).

It belongs to the LysE/ArgO transporter (TC 2.A.75) family.

It localises to the cell inner membrane. It carries out the reaction L-arginine(in) = L-arginine(out). Functionally, involved in the export of arginine. Important to control the intracellular level of arginine and the correct balance between arginine and lysine. This chain is Arginine exporter protein ArgO, found in Photorhabdus laumondii subsp. laumondii (strain DSM 15139 / CIP 105565 / TT01) (Photorhabdus luminescens subsp. laumondii).